A 284-amino-acid chain; its full sequence is Bifunctional protein FolD (284 aa).

NADP(+)-binding positions include 166-168 (GAS) and Ile232.

Belongs to the tetrahydrofolate dehydrogenase/cyclohydrolase family. As to quaternary structure, homodimer.

The enzyme catalyses (6R)-5,10-methylene-5,6,7,8-tetrahydrofolate + NADP(+) = (6R)-5,10-methenyltetrahydrofolate + NADPH. It carries out the reaction (6R)-5,10-methenyltetrahydrofolate + H2O = (6R)-10-formyltetrahydrofolate + H(+). Its pathway is one-carbon metabolism; tetrahydrofolate interconversion. In terms of biological role, catalyzes the oxidation of 5,10-methylenetetrahydrofolate to 5,10-methenyltetrahydrofolate and then the hydrolysis of 5,10-methenyltetrahydrofolate to 10-formyltetrahydrofolate. This Stutzerimonas stutzeri (strain A1501) (Pseudomonas stutzeri) protein is Bifunctional protein FolD.